The sequence spans 452 residues: Bifunctional protein GlmU (452 aa).

Positions Met1–Arg226 are pyrophosphorylase. UDP-N-acetyl-alpha-D-glucosamine-binding positions include Leu8–Gly11, Lys22, Gln73, Gly78–Thr79, Tyr100–Asp102, Gly137, Glu151, Asn166, and Asn224. Mg(2+) is bound at residue Asp102. A Mg(2+)-binding site is contributed by Asn224. The linker stretch occupies residues Ala227–Gln247. The N-acetyltransferase stretch occupies residues Gly248–Lys452. UDP-N-acetyl-alpha-D-glucosamine-binding residues include Arg330 and Lys348. The active-site Proton acceptor is His360. Tyr363 and Asn374 together coordinate UDP-N-acetyl-alpha-D-glucosamine. Residues Ala377, Asn383–Tyr384, Ser402, Ala420, and Arg437 contribute to the acetyl-CoA site.

It in the N-terminal section; belongs to the N-acetylglucosamine-1-phosphate uridyltransferase family. This sequence in the C-terminal section; belongs to the transferase hexapeptide repeat family. In terms of assembly, homotrimer. Mg(2+) serves as cofactor.

The protein localises to the cytoplasm. It catalyses the reaction alpha-D-glucosamine 1-phosphate + acetyl-CoA = N-acetyl-alpha-D-glucosamine 1-phosphate + CoA + H(+). The enzyme catalyses N-acetyl-alpha-D-glucosamine 1-phosphate + UTP + H(+) = UDP-N-acetyl-alpha-D-glucosamine + diphosphate. It participates in nucleotide-sugar biosynthesis; UDP-N-acetyl-alpha-D-glucosamine biosynthesis; N-acetyl-alpha-D-glucosamine 1-phosphate from alpha-D-glucosamine 6-phosphate (route II): step 2/2. It functions in the pathway nucleotide-sugar biosynthesis; UDP-N-acetyl-alpha-D-glucosamine biosynthesis; UDP-N-acetyl-alpha-D-glucosamine from N-acetyl-alpha-D-glucosamine 1-phosphate: step 1/1. Its pathway is bacterial outer membrane biogenesis; LPS lipid A biosynthesis. Its function is as follows. Catalyzes the last two sequential reactions in the de novo biosynthetic pathway for UDP-N-acetylglucosamine (UDP-GlcNAc). The C-terminal domain catalyzes the transfer of acetyl group from acetyl coenzyme A to glucosamine-1-phosphate (GlcN-1-P) to produce N-acetylglucosamine-1-phosphate (GlcNAc-1-P), which is converted into UDP-GlcNAc by the transfer of uridine 5-monophosphate (from uridine 5-triphosphate), a reaction catalyzed by the N-terminal domain. This chain is Bifunctional protein GlmU, found in Aliivibrio fischeri (strain MJ11) (Vibrio fischeri).